Reading from the N-terminus, the 415-residue chain is Lupus La protein homolog (415 aa).

The HTH La-type RNA-binding domain maps to 7–99 (NEKMAALEAK…RRSPSRPLPE (93 aa)). Phosphoserine occurs at positions 92 and 94. The 77-residue stretch at 111–187 (RSVYIKGFPT…TNLLILFKED (77 aa)) folds into the RRM domain. At K116 the chain carries N6-acetyllysine. T120 is modified (phosphothreonine). An N6-acetyllysine mark is found at K128 and K327. The xRRM domain maps to 226 to 343 (EGKMGCLLKF…HAARRFKGSH (118 aa)). The segment at 323–415 (ESLNKWKSKG…KKRENGARDK (93 aa)) is disordered. Positions 328-341 (WKSKGGHAARRFKG) are enriched in basic residues. N6-acetyllysine is present on K356. The residue at position 377 (T377) is a Phosphothreonine. The segment covering 377 to 415 (TRFDDDDHRRGPVKRGIDGRDREEPASKHKKRENGARDK) has biased composition (basic and acidic residues).

Interacts with DDX15. May interact with RUFY1. Post-translationally, phosphorylated.

Its subcellular location is the nucleus. Its function is as follows. Binds to the 3' poly(U) terminus of nascent RNA polymerase III transcripts, protecting them from exonuclease digestion and facilitating their folding and maturation. In Rattus norvegicus (Rat), this protein is Lupus La protein homolog (Ssb).